A 257-amino-acid chain; its full sequence is Tryptophan synthase alpha chain (257 aa).

Catalysis depends on proton acceptor residues Glu47 and Asp58.

It belongs to the TrpA family. As to quaternary structure, tetramer of two alpha and two beta chains.

The catalysed reaction is (1S,2R)-1-C-(indol-3-yl)glycerol 3-phosphate + L-serine = D-glyceraldehyde 3-phosphate + L-tryptophan + H2O. The protein operates within amino-acid biosynthesis; L-tryptophan biosynthesis; L-tryptophan from chorismate: step 5/5. Functionally, the alpha subunit is responsible for the aldol cleavage of indoleglycerol phosphate to indole and glyceraldehyde 3-phosphate. In Listeria innocua serovar 6a (strain ATCC BAA-680 / CLIP 11262), this protein is Tryptophan synthase alpha chain.